Reading from the N-terminus, the 234-residue chain is NAD-dependent protein deacetylase (234 aa).

The Deacetylase sirtuin-type domain occupies 1–234 (MSDITAAQTT…AVDFFEGVQV (234 aa)). The NAD(+) site is built by alanine 23, threonine 27, arginine 35, glutamine 99, isoleucine 101, aspartate 102, histidine 117, threonine 184, serine 185, asparagine 208, and valine 226. Nicotinamide is bound by residues isoleucine 101 and aspartate 102. The Proton acceptor role is filled by histidine 117.

It belongs to the sirtuin family. Class U subfamily.

It localises to the cytoplasm. It carries out the reaction N(6)-acetyl-L-lysyl-[protein] + NAD(+) + H2O = 2''-O-acetyl-ADP-D-ribose + nicotinamide + L-lysyl-[protein]. Its function is as follows. NAD-dependent protein deacetylase which modulates the activities of several enzymes which are inactive in their acetylated form. In Lactiplantibacillus plantarum (strain ATCC BAA-793 / NCIMB 8826 / WCFS1) (Lactobacillus plantarum), this protein is NAD-dependent protein deacetylase.